A 38-amino-acid polypeptide reads, in one-letter code: Large ribosomal subunit protein bL36 (38 aa).

It belongs to the bacterial ribosomal protein bL36 family.

This Mycoplasma mobile (strain ATCC 43663 / 163K / NCTC 11711) (Mesomycoplasma mobile) protein is Large ribosomal subunit protein bL36.